The primary structure comprises 394 residues: 1-acylglycerol-3-phosphate O-acyltransferase ICT1 (394 aa).

Residues 74–381 (VLIHGYAASS…AGHNLFLDNP (308 aa)) form the AB hydrolase-1 domain. An HXXXXD motif motif is present at residues 374–379 (HNLFLD).

The protein belongs to the peptidase S33 family. ABHD4/ABHD5 subfamily.

The enzyme catalyses a 1-acyl-sn-glycero-3-phosphate + an acyl-CoA = a 1,2-diacyl-sn-glycero-3-phosphate + CoA. Lysophosphatidic acid acyltransferase involved in membrane remodeling leading to increased organic solvent tolerance. Involved in resistance to azoles and copper. The polypeptide is 1-acylglycerol-3-phosphate O-acyltransferase ICT1 (ICT1) (Saccharomyces cerevisiae (strain ATCC 204508 / S288c) (Baker's yeast)).